Here is a 276-residue protein sequence, read N- to C-terminus: CTD small phosphatase-like protein (276 aa).

Residues 1–31 (MDGPAIITQVTNPKEDEARSPVAGEKASQRN) are disordered. The FCP1 homology domain maps to 102–260 (LDYGKKCVVI…LDLIPFFEGL (159 aa)). Catalysis depends on aspartate 112, which acts as the 4-aspartylphosphate intermediate. Residues aspartate 112, aspartate 114, and asparagine 223 each contribute to the Mg(2+) site. Aspartate 114 functions as the Proton donor in the catalytic mechanism.

In terms of assembly, monomer. Interacts with REST. Requires Mg(2+) as cofactor.

The protein resides in the nucleus. It carries out the reaction O-phospho-L-seryl-[protein] + H2O = L-seryl-[protein] + phosphate. The catalysed reaction is O-phospho-L-threonyl-[protein] + H2O = L-threonyl-[protein] + phosphate. Functionally, preferentially catalyzes the dephosphorylation of 'Ser-5' within the tandem 7 residue repeats in the C-terminal domain (CTD) of the largest RNA polymerase II subunit POLR2A. Negatively regulates RNA polymerase II transcription, possibly by controlling the transition from initiation/capping to processive transcript elongation. Recruited by REST to neuronal genes that contain RE-1 elements, leading to neuronal gene silencing in non-neuronal cells. The protein is CTD small phosphatase-like protein (Ctdspl) of Mus musculus (Mouse).